Here is a 1167-residue protein sequence, read N- to C-terminus: Pesticidal crystal protein Cry1Ja (1167 aa).

Belongs to the delta endotoxin family.

In terms of biological role, promotes colloidosmotic lysis by binding to the midgut epithelial cells of many lepidopteran larvae. In Bacillus thuringiensis, this protein is Pesticidal crystal protein Cry1Ja (cry1Ja).